The primary structure comprises 578 residues: NADPH oxidase 4 (578 aa).

Topologically, residues 1-16 (MAVSWRSWLANEGVKH) are cytoplasmic. A helical transmembrane segment spans residues 17–37 (LCLFIWLSMNVLLFWKTFLLY). Residues 38–62 (NQGPEYHYLHQMLGLGLCLSRASAS) are Extracellular-facing. A Ferric oxidoreductase domain is found at 58-303 (RASASVLNLN…YCAERLYRYI (246 aa)). A helical membrane pass occupies residues 63 to 83 (VLNLNCSLILLPMCRTLLAYL). At 84-103 (RGSQKVPSRRTRRLLDKSRT) the chain is on the cytoplasmic side. Residues 104-124 (FHITCGVTICIFSGVHVAAHL) traverse the membrane as a helical segment. The Extracellular segment spans residues 125–154 (VNALNFSVNYSEDFVELNAARYRDEDPRKL). An N-linked (GlcNAc...) asparagine glycan is attached at Asn133. Residues 155–175 (LFTTVPGLTGVCMVVVLFLMI) form a helical membrane-spanning segment. The Cytoplasmic portion of the chain corresponds to 176-188 (TASTYAIRVSNYD). The helical transmembrane segment at 189-209 (IFWYTHNLFFVFYMLLTLHVS) threads the bilayer. The Extracellular segment spans residues 210 to 424 (GGLLKYQTNL…SPFEESLNYE (215 aa)). The tract at residues 218 to 273 (NLDTHPPGCISLNRTSSQNISLPEYFSEHFHEPFPEGFSKPAEFTQHKFVKICMEE) is E-loop; essential for H2O2 generating catalytic activity. N-linked (GlcNAc...) asparagine glycosylation is present at Asn230. A mediates interaction with TLR4 region spans residues 248 to 575 (HEPFPEGFSK…YGTRFEYNKE (328 aa)). The 116-residue stretch at 304-419 (RSNKPVTIIS…DGPFGSPFEE (116 aa)) folds into the FAD-binding FR-type domain. The chain crosses the membrane as a helical span at residues 425–445 (VSLCVAGGIGVTPFASILNTL). Residues 446 to 578 (LDDWKPYKLR…RFEYNKESFS (133 aa)) are Cytoplasmic-facing.

In terms of assembly, interacts with protein disulfide isomerase. Interacts with, relocalizes and stabilizes CYBA/p22phox. Interacts with TLR4. Interacts with PPP1R15A. Interacts with LRRC8A; this interaction prevents the ubiquitin-mediated degradation of LRRC8A. Heme serves as cofactor. Post-translationally, deubiquitinated by USP19. N-glycosylated and glycosylation is required for its proper function. In terms of processing, N-glycosylated. In terms of tissue distribution, expressed by distal tubular cells in kidney cortex and in endothelial cells (at protein level). Widely expressed. Strongly expressed in kidney and to a lower extent in heart, adipocytes, hepatoma, endothelial cells, skeletal muscle, brain, several brain tumor cell lines and airway epithelial cells.

The protein resides in the cytoplasm. It localises to the endoplasmic reticulum membrane. It is found in the cell membrane. Its subcellular location is the cell junction. The protein localises to the focal adhesion. The protein resides in the nucleus. It localises to the nucleolus. It is found in the perinuclear region. It catalyses the reaction NADPH + 2 O2 = 2 superoxide + NADP(+) + H(+). The catalysed reaction is NADPH + O2 + H(+) = H2O2 + NADP(+). With respect to regulation, inhibited by plumbagin. Activated by phorbol 12-myristate 13-acetate (PMA). Activated by insulin. Inhibited by diphenylene iodonium. NADPH oxidase that catalyzes predominantly the reduction of oxygen to H2O2. Can also catalyze to a smaller extent, the reduction of oxygen to superoxide. May function as an oxygen sensor regulating the KCNK3/TASK-1 potassium channel and HIF1A activity. May regulate insulin signaling cascade. May play a role in apoptosis, bone resorption and lipolysaccharide-mediated activation of NFKB. May produce superoxide in the nucleus and play a role in regulating gene expression upon cell stimulation. Promotes ferroptosis, reactive oxygen species production and reduced glutathione (GSH) levels by activating NLRP3 inflammasome activation and cytokine release. In terms of biological role, NADPH oxidase that catalyzes the generation of superoxide from molecular oxygen utilizing NADPH as an electron donor. Involved in redox signaling in vascular cells. Modulates the nuclear activation of ERK1/2 and the ELK1 transcription factor, and is capable of inducing nuclear DNA damage. Functionally, lacks superoxide-generating NADPH oxidase activity. This Homo sapiens (Human) protein is NADPH oxidase 4 (NOX4).